The primary structure comprises 137 residues: Phosphoribosyl-AMP cyclohydrolase (137 aa).

Asp-84 is a binding site for Mg(2+). Cys-85 contributes to the Zn(2+) binding site. Mg(2+) is bound by residues Asp-86 and Asp-88. Zn(2+) is bound by residues Cys-101 and Cys-108.

Belongs to the PRA-CH family. In terms of assembly, homodimer. Mg(2+) serves as cofactor. The cofactor is Zn(2+).

The protein resides in the cytoplasm. The catalysed reaction is 1-(5-phospho-beta-D-ribosyl)-5'-AMP + H2O = 1-(5-phospho-beta-D-ribosyl)-5-[(5-phospho-beta-D-ribosylamino)methylideneamino]imidazole-4-carboxamide. It participates in amino-acid biosynthesis; L-histidine biosynthesis; L-histidine from 5-phospho-alpha-D-ribose 1-diphosphate: step 3/9. Catalyzes the hydrolysis of the adenine ring of phosphoribosyl-AMP. This Chlorobaculum parvum (strain DSM 263 / NCIMB 8327) (Chlorobium vibrioforme subsp. thiosulfatophilum) protein is Phosphoribosyl-AMP cyclohydrolase.